A 451-amino-acid polypeptide reads, in one-letter code: MHKLLFSLLSVVSLSFLLFFHGAEARQREAPFPNACHFSQINSLAPAQATKFEAGQMEVWDHMSPELRCAGVTVARITLQPNSIFLPAFFSPPALAYVVQGEGVMGTIASGCPETFAEVEGSSGRGGGGDPGRRFEDMHQKLENFRRGDVFASLAGVSQWWYNRGDSDAVIVIVLDVTNRENQLDQVPRMFQLAGSRTQEEEQPLTWPSGNNAFSGFDPNIIAEAFKINIETAKQLQNQKDNRGNIIRANGPLHFVIPPPREWQQDGIANGIEETYCTAKIHENIDDPERSDHFSTRAGRISTLNSLNLPVLRLVRLNALRGYLYSGGMVLPQWTANAHTVLYVTGGQAKIQVVDDNGQSVFNEQVGQGQIIVIPQGFAVSKTAGETGFEWISFKTNDNAYINTLSGQTSYLRAVPVDVIKASYGVNEEEAKRIKFSQQETMLSMTPSSSS.

The first 25 residues, 1–25 (MHKLLFSLLSVVSLSFLLFFHGAEA), serve as a signal peptide directing secretion. 2 disulfide bridges follow: Cys36/Cys69 and Cys112/Cys277. Ser39 is modified (phosphoserine). 2 consecutive Cupin type-1 domains span residues 42–234 (NSLA…ETAK) and 283–432 (ENID…EEAK). At Thr115 the chain carries Phosphothreonine. The residue at position 302 (Ser302) is a Phosphoserine. Phosphothreonine is present on Thr396. Ser437 is modified (phosphoserine).

It belongs to the 11S seed storage protein (globulins) family. As to quaternary structure, hexamer; each subunit is composed of an acidic and a basic chain derived from a single precursor and linked by a disulfide bond. Post-translationally, ubiquitinated. In terms of processing, proteolytically processed during seed maturation at a conserved Asn-Gly peptide bond by an asparaginyl endopeptidase to produce two mature polypeptides referred to as alpha and beta subunits that are joined together by a disulfide bond. Phosphorylated in seeds on some Tyr residues in response to abscisic acid (ABA). As to expression, accumulates in seeds 8 days after anthesis.

The protein localises to the protein storage vacuole. Functionally, seed storage protein. The sequence is that of 12S seed storage protein CRD (CRD) from Arabidopsis thaliana (Mouse-ear cress).